Reading from the N-terminus, the 230-residue chain is Ribose-5-phosphate isomerase A (230 aa).

Substrate-binding positions include threonine 31–threonine 34, aspartate 88–aspartate 91, and lysine 101–glycine 104. The active-site Proton acceptor is glutamate 110. Residue lysine 128 coordinates substrate.

This sequence belongs to the ribose 5-phosphate isomerase family. As to quaternary structure, homodimer.

The catalysed reaction is aldehydo-D-ribose 5-phosphate = D-ribulose 5-phosphate. It participates in carbohydrate degradation; pentose phosphate pathway; D-ribose 5-phosphate from D-ribulose 5-phosphate (non-oxidative stage): step 1/1. Its function is as follows. Catalyzes the reversible conversion of ribose-5-phosphate to ribulose 5-phosphate. The chain is Ribose-5-phosphate isomerase A from Lactobacillus helveticus (strain DPC 4571).